Here is a 289-residue protein sequence, read N- to C-terminus: MKRIMLFLATNLAVVLVLSVVLNIVYAVTGMQPGSLSGLLVMAAVFGFGGAFISLMMSKGMALRSVGGMVIESPRNETEHWLLETVGRQAQQAGIGMPTVAIYEAADINAFATGAKRDDSLVAVSTGLLHNMTRDEAEAVLAHEVSHIANGDMVTMTLMQGVVNTFVIFLSRFIANIVASNDDEEGQGTNMMVYFGVSMVLELVFGFLASFLTMWYSRHREFHADAGAAQLVGKEKMIAALERLKMSHESQLDGTMMAFGINGKRSMTELLMSHPPLDKRISALRSQQY.

2 helical membrane passes run 4–24 and 36–56; these read IMLF…VLNI and LSGL…ISLM. His143 serves as a coordination point for Zn(2+). Glu144 is an active-site residue. His147 contributes to the Zn(2+) binding site. The next 2 helical transmembrane spans lie at 158–178 and 192–212; these read LMQG…ANIV and MVYF…ASFL. Residue Glu221 participates in Zn(2+) binding.

The protein belongs to the peptidase M48B family. The cofactor is Zn(2+).

It localises to the cell inner membrane. The polypeptide is Protease HtpX (Vibrio campbellii (strain ATCC BAA-1116)).